Consider the following 443-residue polypeptide: MPSASLLKAAAVNALKMSQVGRGLCLPGMNRYMPVMHGAQGCTSFGLVLLVRDFREAIPLQTTAMNEVSSTLGGMENIAKAVLNIRLRAKRDLIAICSTGLTETKGDDVNAYLRLTAEAPRPGRYLTGLCPHALTTGASQDGWAKALEALAGRWESRGRADARQADNLLAGCHLTPADIEEMRDIVQSFGLEPIVLPDVSSWLDGHLPDNFSPTSMGGTTLAEMRALGASIVCIANRRTEAPPTAQAVQELCGVPYVVFDRLTGLQANDRFLAYLEYVSGQPIPARYRRQRSQLQDAMLGWPLLLRPGVKVAIGAEPEPVAVTLRHGWPRWAAELGGCRDHHDLAGARWRSPQPGWWIGANLEAPGTKGARARACAGSCWLTHSHGGQAAERLHIPFHRAGLPPCSTGLGAGHCLSVGYRGTRGLIFEIGQPVAGRGPCTYPG.

A [7Fe-Mo-9S-C-homocitryl] cluster-binding site is contributed by C42.

This sequence belongs to the NifD/NifK/NifE/NifN family.

Its pathway is cofactor biosynthesis; Fe-Mo cofactor biosynthesis. Functionally, this protein may play a role in the biosynthesis of the prosthetic group of nitrogenase (FeMo cofactor). This Herbaspirillum seropedicae protein is Nitrogenase iron-molybdenum cofactor biosynthesis protein NifN (nifN).